We begin with the raw amino-acid sequence, 743 residues long: Sulfhydryl oxidase 1 (743 aa).

Residues 1–42 (MWRRRARSGGGGGGGGGGAAPRCRWWPAVLALLAAALPAARS) form the signal peptide. The 124-residue stretch at 43-166 (RSLYSPSDPL…LRRAIITNLE (124 aa)) folds into the Thioredoxin domain. Active-site nucleophile residues include Cys80 and Cys83. Disulfide bonds link Cys80/Cys83 and Cys111/Cys120. 5 N-linked (GlcNAc...) asparagine glycosylation sites follow: Asn254, Asn288, Asn295, Asn371, and Asn401. An intrachain disulfide couples Cys407 to Cys419. An ERV/ALR sulfhydryl oxidase domain is found at 410 to 513 (SEPHFRGYPC…EDPQFPKLQW (104 aa)). Residues Arg415, Trp422, His426, Glu461, His465, 488–495 (WSHHNEVN), Lys510, and Trp513 each bind FAD. An intrachain disulfide couples Cys459 to Cys462. A disulfide bridge links Cys519 with Cys522. The interval 567-617 (ASARLSTAGLREKEEEERKEEEEEGEKETEKPHREGETGRPGSSELRRPSI) is disordered. Residues 580 to 593 (EEEERKEEEEEGEK) show a composition bias toward acidic residues. Basic and acidic residues predominate over residues 594–604 (ETEKPHREGET). A helical transmembrane segment spans residues 707-727 (SLCIALYFLSSMCLLGMYTFF).

Belongs to the quiescin-sulfhydryl oxidase (QSOX) family. FAD is required as a cofactor. Post-translationally, N-glycosylated. O-glycosylated on Thr and Ser residues.

It is found in the golgi apparatus membrane. Its subcellular location is the secreted. The enzyme catalyses 2 R'C(R)SH + O2 = R'C(R)S-S(R)CR' + H2O2. Catalyzes the oxidation of sulfhydryl groups in peptide and protein thiols to disulfides with the reduction of oxygen to hydrogen peroxide. Plays a role in disulfide bond formation in a variety of extracellular proteins. In fibroblasts, required for normal incorporation of laminin into the extracellular matrix, and thereby for normal cell-cell adhesion and cell migration. The polypeptide is Sulfhydryl oxidase 1 (QSOX1) (Gallus gallus (Chicken)).